Consider the following 168-residue polypeptide: Small ribosomal subunit protein bS16 (168 aa).

Positions 110-168 are disordered; that stretch reads LAEAEGGPSNEATQPKKKKAPAKKAASDIEATADPAGNADKSEPAAEGEDATVAGATEG.

The protein belongs to the bacterial ribosomal protein bS16 family.

In Mycobacterium sp. (strain JLS), this protein is Small ribosomal subunit protein bS16.